A 79-amino-acid polypeptide reads, in one-letter code: Sulfur carrier protein TusA (79 aa).

The Cysteine persulfide intermediate role is filled by Cys-17.

The protein belongs to the sulfur carrier protein TusA family.

It is found in the cytoplasm. Sulfur carrier protein which probably makes part of a sulfur-relay system. The protein is Sulfur carrier protein TusA of Haemophilus influenzae (strain ATCC 51907 / DSM 11121 / KW20 / Rd).